The following is a 286-amino-acid chain: Main hemagglutinin component type C (286 aa).

The 1-alpha repeat unit spans residues 2 to 55 (SQTNANDLRNNEVFFISPSNNTNKVLDKISQSEVKLWNKLSGANQKWRLIYDTN). Ricin B-type lectin domains lie at 12-140 (NEVF…FKFS) and 180-284 (DSSR…WIIN). The stretch at 56–100 (KQAYKIKVMDNTSLILTWNAPLSSVSVKTDTNGDNQYWYLLQNYI) is one 1-beta repeat. Residues 101 to 148 (SRNVIIRNYMNPNLVLQYNIDDTLMVSTQTSSSNQFFKFSNCIYEALN) form a 1-gamma repeat. Residues 149–193 (NRNCKLQTQLNSDRFLSKNLNSQIIVLWQWFDSSRQKWIIEYNET) form a 2-alpha repeat. The tract at residues 167 to 183 (NLNSQIIVLWQWFDSSR) is sugar-binding site 1. The stretch at 194–239 (KSAYTLKCQENNRYLTWIQNSNNYVETYQSTDSLIQYWNINYLDND) is one 2-beta repeat. The stretch at 240–286 (ASKYILYNLQDTNRVLDVYNSQIANGTHVIVDSYHGNTNQQWIINLI) is one 2-gamma repeat. The sugar-binding site 2 stretch occupies residues 256–279 (DVYNSQIANGTHVIVDSYHGNTNQ).

Botulinum toxins are produced as progenitor toxins of large molecular sizes of 12S (M toxin) and 16S (L toxin). M toxin consists of a non-toxic, non-hemagglutinin component (NTNHA) and the neurotoxin. L toxin consists of the M toxin and the 3 subcomponents of hemagglutinin (HA). HA is composed of subcomponents of 70, 33, and 17 kDa. The 70 kDa subcomponent undergoes proteolytic processing and is split into HA-55 (also called HA-53 and HA3b) and HA-22-23 (also called HA3a). The stoichiometry of the whole complex has been modeled as one BoNT/C, one NTNHA, three HA-70, six HA-33 and three HA-17.

The protein resides in the secreted. In terms of biological role, agglutinates human erythrocytes. The hemagglutinin (HA) component of the progenitor toxin protects the structural integrity of botulinum neurotoxin; may increase internalization of the neurotoxin into the bloodstream of the host. The hemagglutinin (HA) component is involved in binding to the upper small intestine through interactions with glycolipids and glycoproteins containing sialic acid moieties. Binds galactose or oligosaccharides with galactose at their non-reducing end. Binds eukaryotic host mucins; binding is inhibited by N-acetyl-beta-neuraminic acid, N-acetyl-D-galactosamine, galactose, and methyl N-acetyl-beta-neuraminic acid. Binds N-acetyl-beta-neuraminic acid, N-acetyl-D-galactosamine and galactose (but not glucose) via 2 sites. In Clostridium botulinum C (Clostridium botulinum C bacteriophage), this protein is Main hemagglutinin component type C.